Reading from the N-terminus, the 464-residue chain is Protein FAM90A20 (464 aa).

Disordered stretches follow at residues 16-42, 71-213, 228-247, 254-273, 309-389, and 418-437; these read RAQT…DPRL, ATLG…IPRP, PTHS…ASKT, VRTQ…CPSA, RLGP…HDGA, and EKPG…SEAP. Composition is skewed to basic and acidic residues over residues 74–83 and 97–114; these read GKKEGKENLK and NKDK…DPQR. The span at 180 to 197 shows a compositional bias: low complexity; the sequence is LASLSPLRKASLSSSSSL.

The protein belongs to the FAM90 family.

This Homo sapiens (Human) protein is Protein FAM90A20.